Consider the following 331-residue polypeptide: Autoinducer 2 import system permease protein LsrD (331 aa).

The next 10 helical transmembrane spans lie at 7–27 (YGWELALAALLVLEIGLFGLS), 45–65 (ICIGIVALPLTMVIVSGGIDI), 67–87 (FGSTIGLCSIFLGVMFQAGVP), 90–110 (IAIPLTLLVGALCGLINAGLI), 118–138 (LVITLGTMYLFGGSALLLSGI), 162–182 (LLGLPVPLVIFMVCVLLFWLL), 212–232 (TLCLLYALTGMASAIAAVLLV), 240–260 (SDLGASFLMPAITAVVLGGAN), 261–281 (IYGGSGSILGTALAVLLVGYL), and 288–308 (IGTPNQISSALSGALLILVVV).

Belongs to the binding-protein-dependent transport system permease family. AraH/RbsC subfamily. As to quaternary structure, the complex is composed of two ATP-binding proteins (LsrA), two transmembrane proteins (LsrC and LsrD) and a solute-binding protein (LsrB).

Its subcellular location is the cell inner membrane. In terms of biological role, part of the ABC transporter complex LsrABCD involved in autoinducer 2 (AI-2) import. Probably responsible for the translocation of the substrate across the membrane. The chain is Autoinducer 2 import system permease protein LsrD (lsrD) from Yersinia enterocolitica serotype O:8 / biotype 1B (strain NCTC 13174 / 8081).